Consider the following 358-residue polypeptide: UDP-N-acetylglucosamine--N-acetylmuramyl-(pentapeptide) pyrophosphoryl-undecaprenol N-acetylglucosamine transferase (358 aa).

Residues 12–14, Asn124, Arg162, Ser185, Ile242, 261–266, and Gln287 contribute to the UDP-N-acetyl-alpha-D-glucosamine site; these read TGG and ALTVSE.

Belongs to the glycosyltransferase 28 family. MurG subfamily.

The protein localises to the cell inner membrane. The enzyme catalyses di-trans,octa-cis-undecaprenyl diphospho-N-acetyl-alpha-D-muramoyl-L-alanyl-D-glutamyl-meso-2,6-diaminopimeloyl-D-alanyl-D-alanine + UDP-N-acetyl-alpha-D-glucosamine = di-trans,octa-cis-undecaprenyl diphospho-[N-acetyl-alpha-D-glucosaminyl-(1-&gt;4)]-N-acetyl-alpha-D-muramoyl-L-alanyl-D-glutamyl-meso-2,6-diaminopimeloyl-D-alanyl-D-alanine + UDP + H(+). It participates in cell wall biogenesis; peptidoglycan biosynthesis. Its function is as follows. Cell wall formation. Catalyzes the transfer of a GlcNAc subunit on undecaprenyl-pyrophosphoryl-MurNAc-pentapeptide (lipid intermediate I) to form undecaprenyl-pyrophosphoryl-MurNAc-(pentapeptide)GlcNAc (lipid intermediate II). In Pseudoalteromonas translucida (strain TAC 125), this protein is UDP-N-acetylglucosamine--N-acetylmuramyl-(pentapeptide) pyrophosphoryl-undecaprenol N-acetylglucosamine transferase.